We begin with the raw amino-acid sequence, 185 residues long: Ribosome-recycling factor (185 aa).

Belongs to the RRF family.

The protein localises to the cytoplasm. Responsible for the release of ribosomes from messenger RNA at the termination of protein biosynthesis. May increase the efficiency of translation by recycling ribosomes from one round of translation to another. The protein is Ribosome-recycling factor of Neisseria meningitidis serogroup A / serotype 4A (strain DSM 15465 / Z2491).